The sequence spans 180 residues: Large ribosomal subunit protein uL5 (180 aa).

The protein belongs to the universal ribosomal protein uL5 family. Part of the 50S ribosomal subunit; part of the 5S rRNA/L5/L18/L25 subcomplex. Contacts the 5S rRNA and the P site tRNA. Forms a bridge to the 30S subunit in the 70S ribosome.

In terms of biological role, this is one of the proteins that bind and probably mediate the attachment of the 5S RNA into the large ribosomal subunit, where it forms part of the central protuberance. In the 70S ribosome it contacts protein S13 of the 30S subunit (bridge B1b), connecting the 2 subunits; this bridge is implicated in subunit movement. Contacts the P site tRNA; the 5S rRNA and some of its associated proteins might help stabilize positioning of ribosome-bound tRNAs. The polypeptide is Large ribosomal subunit protein uL5 (Xanthomonas axonopodis pv. citri (strain 306)).